Reading from the N-terminus, the 254-residue chain is Agamous-like MADS-box protein AGL9 homolog (254 aa).

An MADS-box domain is found at 3-57 (RGRVELKRIENKINRQVTFAKRRNGLLKKAYELSVLCDAEVALIIFSNRGKLYEF). The K-box domain maps to 91–181 (ELSSQQEYLK…RLRLADGYQM (91 aa)).

The protein resides in the nucleus. Functionally, probable transcription factor active in inflorescence development and floral organogenesis. This is Agamous-like MADS-box protein AGL9 homolog (AGL9) from Sinapis alba (White mustard).